Reading from the N-terminus, the 321-residue chain is Taste receptor type 2 member 135 (321 aa).

The Extracellular segment spans residues 1–28 (MGPIMSTGETSTAHTVLGCQITDKTVIT). A helical membrane pass occupies residues 29-49 (LFVILVFSCLVAVVGNGFIII). Over 50–75 (ALGMKWLLRRTLSAHNKLLISLAASR) the chain is Cytoplasmic. Residues 76–96 (FCLQCVVIGKNIYVFLNPSSF) traverse the membrane as a helical segment. The Extracellular segment spans residues 97 to 106 (PYNPVIQLLN). Residues 107–127 (LMWDFLTAATIWFCSLLGFFY) traverse the membrane as a helical segment. The Cytoplasmic segment spans residues 128 to 149 (CVKIATLTHPVFVWLKYRLPGW). Residues 150–170 (VPWMLLSAVGMSSLTSILCFI) traverse the membrane as a helical segment. Over 171-207 (GNHMIYQNYARRGHQPWNATGNSLRHSLEKFYFISIK) the chain is Extracellular. The N-linked (GlcNAc...) asparagine glycan is linked to Asn-188. A helical transmembrane segment spans residues 208-228 (IIMWTVPTVIFSIFMSLLLVS). Residues 229 to 253 (LVRHMKKTLLALSELRDVWAQAHFK) are Cytoplasmic-facing. The chain crosses the membrane as a helical span at residues 254-274 (ALLPLLSFIILFISCFLTLVL). The Extracellular segment spans residues 275-286 (SSASSTPYQEFR). The chain crosses the membrane as a helical span at residues 287–307 (YWMWQVVIHLCTVIHPIVILL). Residues 308–321 (SNPVLRVVMKRGCC) lie on the Cytoplasmic side of the membrane.

Belongs to the G-protein coupled receptor T2R family.

Its subcellular location is the membrane. Its function is as follows. Putative taste receptor which may play a role in the perception of bitterness. This chain is Taste receptor type 2 member 135, found in Rattus norvegicus (Rat).